The sequence spans 334 residues: Holliday junction branch migration complex subunit RuvB (334 aa).

The large ATPase domain (RuvB-L) stretch occupies residues 1–182 (MNERMVDQSM…FGVHLRLEYY (182 aa)). ATP is bound by residues Leu21, Arg22, Gly63, Lys66, Thr67, Thr68, 129-131 (EDF), Arg172, Tyr182, and Arg219. Residue Thr67 coordinates Mg(2+). The small ATPAse domain (RuvB-S) stretch occupies residues 183-253 (NESDLKEIII…TTKHALGLLQ (71 aa)). The head domain (RuvB-H) stretch occupies residues 256 to 334 (QHGLDYIDHK…HFAKSNEERG (79 aa)). Arg292, Arg311, and Arg316 together coordinate DNA.

It belongs to the RuvB family. Homohexamer. Forms an RuvA(8)-RuvB(12)-Holliday junction (HJ) complex. HJ DNA is sandwiched between 2 RuvA tetramers; dsDNA enters through RuvA and exits via RuvB. An RuvB hexamer assembles on each DNA strand where it exits the tetramer. Each RuvB hexamer is contacted by two RuvA subunits (via domain III) on 2 adjacent RuvB subunits; this complex drives branch migration. In the full resolvosome a probable DNA-RuvA(4)-RuvB(12)-RuvC(2) complex forms which resolves the HJ.

Its subcellular location is the cytoplasm. The catalysed reaction is ATP + H2O = ADP + phosphate + H(+). The RuvA-RuvB-RuvC complex processes Holliday junction (HJ) DNA during genetic recombination and DNA repair, while the RuvA-RuvB complex plays an important role in the rescue of blocked DNA replication forks via replication fork reversal (RFR). RuvA specifically binds to HJ cruciform DNA, conferring on it an open structure. The RuvB hexamer acts as an ATP-dependent pump, pulling dsDNA into and through the RuvAB complex. RuvB forms 2 homohexamers on either side of HJ DNA bound by 1 or 2 RuvA tetramers; 4 subunits per hexamer contact DNA at a time. Coordinated motions by a converter formed by DNA-disengaged RuvB subunits stimulates ATP hydrolysis and nucleotide exchange. Immobilization of the converter enables RuvB to convert the ATP-contained energy into a lever motion, pulling 2 nucleotides of DNA out of the RuvA tetramer per ATP hydrolyzed, thus driving DNA branch migration. The RuvB motors rotate together with the DNA substrate, which together with the progressing nucleotide cycle form the mechanistic basis for DNA recombination by continuous HJ branch migration. Branch migration allows RuvC to scan DNA until it finds its consensus sequence, where it cleaves and resolves cruciform DNA. In Staphylococcus aureus (strain N315), this protein is Holliday junction branch migration complex subunit RuvB.